The following is a 472-amino-acid chain: Interferon-induced protein with tetratricopeptide repeats 2 (472 aa).

S2 carries the post-translational modification N-acetylserine. 9 TPR repeats span residues 51–89 (ATMC…ADQA), 90–135 (EIRS…RIES), 136–171 (PELD…KPKN), 172–208 (PEFT…NPDN), 247–280 (TDVL…IPNN), 281–335 (AYLH…NLFR), 336–366 (VCSI…KELT), 367–405 (PVAK…NQKS), and 406–448 (REKE…KMQQ). The interval 446–472 (MQQADEDSERGLESGSLIPSASSWNGE) is disordered. Over residues 462 to 472 (LIPSASSWNGE) the composition is skewed to polar residues.

Belongs to the IFIT family. In terms of assembly, domain-swapped homodimer. Component of an interferon-dependent multiprotein complex, at least composed of IFIT1, IFIT2 and IFIT3. Interacts with IFIT1 and IFIT3. Interacts with STING1/MITA and disrupts its interaction with MAVS or TBK1. Interacts with EIF3E and EIF3C.

Its subcellular location is the cytoplasm. The protein resides in the endoplasmic reticulum. Its function is as follows. IFN-induced antiviral protein which inhibits expression of viral messenger RNAs lacking 2'-O-methylation of the 5' cap. The ribose 2'-O-methylation would provide a molecular signature to distinguish between self and non-self mRNAs by the host during viral infection. Viruses evolved several ways to evade this restriction system such as encoding their own 2'-O-methylase for their mRNAs or by stealing host cap containing the 2'-O-methylation (cap snatching mechanism). Binds AU-rich viral RNAs, with or without 5' triphosphorylation, RNA-binding is required for antiviral activity. Can promote apoptosis. The protein is Interferon-induced protein with tetratricopeptide repeats 2 (IFIT2) of Homo sapiens (Human).